The following is a 165-amino-acid chain: Inorganic pyrophosphatase (165 aa).

The substrate site is built by Lys-21, Arg-35, and Tyr-47. Mg(2+) contacts are provided by Asp-57, Asp-62, and Asp-94. A substrate-binding site is contributed by Tyr-131.

This sequence belongs to the PPase family. Homohexamer. The cofactor is Mg(2+).

The protein resides in the cytoplasm. The catalysed reaction is diphosphate + H2O = 2 phosphate + H(+). Catalyzes the hydrolysis of inorganic pyrophosphate (PPi) forming two phosphate ions. This Geobacillus stearothermophilus (Bacillus stearothermophilus) protein is Inorganic pyrophosphatase.